Reading from the N-terminus, the 105-residue chain is Thioredoxin (105 aa).

The 104-residue stretch at 2 to 105 (VKQIESKTAF…KLEATINELV (104 aa)) folds into the Thioredoxin domain. At Lys3 the chain carries N6-acetyllysine. Lys8 carries the post-translational modification N6-succinyllysine. Catalysis depends on nucleophile residues Cys32 and Cys35. The cysteines at positions 32 and 35 are disulfide-linked. N6-acetyllysine is present on Lys39. S-nitrosocysteine occurs at positions 62 and 69. Position 73 is an S-nitrosocysteine; alternate (Cys73). Lys94 is subject to N6-acetyllysine; alternate. Lys94 is subject to N6-succinyllysine; alternate.

The protein belongs to the thioredoxin family. As to quaternary structure, homodimer; disulfide-linked. Interacts with TXNIP through the redox-active site. Interacts with MAP3K5 and CASP3. In case of infection, interacts with S.typhimurium protein slrP. Interacts with APEX1; the interaction stimulates the FOS/JUN AP-1 DNA-binding activity in a redox-dependent manner. In terms of processing, in the fully reduced protein, both Cys-69 and Cys-73 are nitrosylated in response to nitric oxide (NO). When two disulfide bonds are present in the protein, only Cys-73 is nitrosylated. Cys-73 can serve as donor for nitrosylation of target proteins. Post-translationally, in case of infection, ubiquitinated by S.typhimurium protein slrP, leading to its degradation.

It localises to the nucleus. Its subcellular location is the cytoplasm. The protein resides in the secreted. Participates in various redox reactions through the reversible oxidation of its active center dithiol to a disulfide and catalyzes dithiol-disulfide exchange reactions. Plays a role in the reversible S-nitrosylation of cysteine residues in target proteins, and thereby contributes to the response to intracellular nitric oxide. Nitrosylates the active site Cys of CASP3 in response to nitric oxide (NO), and thereby inhibits caspase-3 activity. Induces the FOS/JUN AP-1 DNA-binding activity in ionizing radiation (IR) cells through its oxidation/reduction status and stimulates AP-1 transcriptional activity. Functionally, ADF augments the expression of the interleukin-2 receptor TAC (IL2R/P55). This is Thioredoxin (TXN) from Homo sapiens (Human).